A 522-amino-acid polypeptide reads, in one-letter code: F-box only protein 7 (522 aa).

Residues 1–87 (MKLRVRLQKR…EDAIAAPNLP (87 aa)) are ubiquitin-like. Residues 88-132 (SSTVSEHSSVQNNDQPSLATSSSQSNIQDAQLHDSLQGQATQSEV) are compositionally biased toward polar residues. A disordered region spans residues 88–151 (SSTVSEHSSV…GQHFEAEAVP (64 aa)). The important for interaction with PINK1 stretch occupies residues 91-128 (VSEHSSVQNNDQPSLATSSSQSNIQDAQLHDSLQGQAT). The important for interaction with CDK6 stretch occupies residues 128 to 168 (TQSEVWNDDSVSGPGQHFEAEAVPDVVDVEEGTGYYLAEPM). The interval 179–323 (PHSLEILYQS…PLLAFTRQAL (145 aa)) is important for dimerization and interaction with PSMF1. Residues 328 to 374 (VFGLVVLPLELKLRIFRLLDVRSVLSLSAVCRDLCITSNDQLLWRCL) form the F-box domain. The tract at residues 380–522 (RDGSIRGRDT…WPTDSRLPFM (143 aa)) is important for interaction with CDK6. An omega-N-methylarginine mark is found at R431 and R451. Positions 481 to 484 (RFDP) match the RFDP motif motif. The tract at residues 484–522 (PVGPLPGPNPILPGRGGPSDRFPLRPSRGWPTDSRLPFM) is disordered. R518 carries the asymmetric dimethylarginine modification.

In terms of assembly, part of the SCF (SKP1-CUL1-F-box) E3 ubiquitin-protein ligase complex SCF(FBXO7) formed of CUL1, SKP1, RBX1 and FBXO7. Interacts via its C-terminal proline-rich region with DLGAP5. Interacts with BIRC2. Interacts with CDK6 and promotes its interaction with D-type cyclin. Interacts (via the N-terminal Ubl domain) with PRKN. Interacts (via N-terminal region) with PINK1. Interacts with PSMF1.

It localises to the cytoplasm. Its subcellular location is the nucleus. The protein resides in the mitochondrion. The protein localises to the cytosol. The protein operates within protein modification; protein ubiquitination. Its function is as follows. Substrate recognition component of a SCF (SKP1-CUL1-F-box protein) E3 ubiquitin-protein ligase complex which mediates the ubiquitination and subsequent proteasomal degradation of target proteins and plays a role in several biological processes such as cell cycle, cell proliferation, or maintenance of chromosome stability. Recognizes and ubiquitinates BIRC2 and the cell cycle regulator DLGAP5. Plays a role downstream of PINK1 in the clearance of damaged mitochondria via selective autophagy (mitophagy) by targeting PRKN to dysfunctional depolarized mitochondria. Promotes MFN1 ubiquitination. Mediates the ubiquitination and proteasomal degradation of UXT isoform 2, thereby impairing the NF-kappa-B signaling pathway. Inhibits NF-kappa-B pathway also by promoting the ubiquitinatioin of TRAF2. Affects the assembly state and activity of the proteasome in the cells including neurons by ubiquitinating the proteasomal subunit PSMA2 via 'Lys-63'-linked polyubiquitin chains. Promotes 'Lys-48'-linked polyubiquitination SIRT7, leading to the hydrogen peroxide-induced cell death. This is F-box only protein 7 (FBXO7) from Bos taurus (Bovine).